We begin with the raw amino-acid sequence, 140 residues long: Phosphoribosyl-AMP cyclohydrolase (140 aa).

Aspartate 84 lines the Mg(2+) pocket. Cysteine 85 lines the Zn(2+) pocket. 2 residues coordinate Mg(2+): aspartate 86 and aspartate 88. Zn(2+) is bound by residues cysteine 101 and cysteine 108.

It belongs to the PRA-CH family. Homodimer. Mg(2+) is required as a cofactor. It depends on Zn(2+) as a cofactor.

Its subcellular location is the cytoplasm. It catalyses the reaction 1-(5-phospho-beta-D-ribosyl)-5'-AMP + H2O = 1-(5-phospho-beta-D-ribosyl)-5-[(5-phospho-beta-D-ribosylamino)methylideneamino]imidazole-4-carboxamide. The protein operates within amino-acid biosynthesis; L-histidine biosynthesis; L-histidine from 5-phospho-alpha-D-ribose 1-diphosphate: step 3/9. Catalyzes the hydrolysis of the adenine ring of phosphoribosyl-AMP. This chain is Phosphoribosyl-AMP cyclohydrolase, found in Chloroherpeton thalassium (strain ATCC 35110 / GB-78).